The primary structure comprises 92 residues: Small ribosomal subunit protein uS19 (92 aa).

The protein belongs to the universal ribosomal protein uS19 family.

Functionally, protein S19 forms a complex with S13 that binds strongly to the 16S ribosomal RNA. The protein is Small ribosomal subunit protein uS19 of Photobacterium profundum (strain SS9).